The following is a 154-amino-acid chain: Fimbrial protein (154 aa).

Residues 1-6 (MKAQKG) constitute a propeptide, leader sequence. Phenylalanine 7 is modified (N-methylphenylalanine). Residues 7 to 27 (FTLIELMIVVAIIGILAAIAI) form a helical membrane-spanning segment. An intrachain disulfide couples cysteine 133 to cysteine 151.

Belongs to the N-Me-Phe pilin family. As to quaternary structure, the pili are polar flexible filaments of about 5.4 nanometers diameter and 2.5 micrometers average length; they consist of only a single polypeptide chain arranged in a helical configuration of five subunits per turn in the assembled pilus.

It is found in the fimbrium. The protein resides in the membrane. This is Fimbrial protein (pilA) from Pseudomonas aeruginosa.